Here is a 154-residue protein sequence, read N- to C-terminus: 20 kDa calcium-binding protein (154 aa).

EF-hand domains lie at 13-48 (DQVKIAKDVFKRFDKRGQEKISTTDLGPAFRALNLT), 49-84 (VKPDTLKEWADQVDDDATGFIDFNGFLICYGKKLQE), 86-121 (QDERDLRDAFRVLDKNKRGEIDVEDLRWILKGLGDD), and 122-154 (LTEEEIDDMIRDTDTDGSGFVDFDEFYKLMTSE). Residues Asp-62, Asp-64, Thr-66, Asp-99, Asn-101, Glu-105, Asp-110, Asp-135, Asp-137, Ser-139, and Glu-146 each coordinate Ca(2+).

It localises to the tegument membrane. Calcium-binding protein. The chain is 20 kDa calcium-binding protein (SM20) from Schistosoma mansoni (Blood fluke).